A 180-amino-acid chain; its full sequence is Large ribosomal subunit protein uL5 (180 aa).

It belongs to the universal ribosomal protein uL5 family. Part of the 50S ribosomal subunit; part of the 5S rRNA/L5/L18/L25 subcomplex. Contacts the 5S rRNA and the P site tRNA. Forms a bridge to the 30S subunit in the 70S ribosome.

This is one of the proteins that bind and probably mediate the attachment of the 5S RNA into the large ribosomal subunit, where it forms part of the central protuberance. In the 70S ribosome it contacts protein S13 of the 30S subunit (bridge B1b), connecting the 2 subunits; this bridge is implicated in subunit movement. Contacts the P site tRNA; the 5S rRNA and some of its associated proteins might help stabilize positioning of ribosome-bound tRNAs. The chain is Large ribosomal subunit protein uL5 from Streptococcus mutans serotype c (strain ATCC 700610 / UA159).